The sequence spans 192 residues: VQ motif-containing protein 22 (192 aa).

Over residues 24-38 (ASTAVTTTTAGDTTS) the composition is skewed to low complexity. Positions 24-65 (ASTAVTTTTAGDTTSIDSRLSPETGRVTKPTRRRSRASRRTP) are disordered. Basic residues predominate over residues 52–62 (KPTRRRSRASR). The short motif at 76–85 (FRAMVQQYTG) is the VQ element. Disordered stretches follow at residues 101-135 (FSLTSSSDPSAGSSQQAPWQYNFQPHAPLQPPQRP) and 163-192 (FGTVDGSGGGGSAPSSKEATNSNSSSSRLQ). Low complexity-rich tracts occupy residues 102 to 114 (SLTSSSDPSAGSS) and 175 to 192 (APSSKEATNSNSSSSRLQ).

The protein resides in the nucleus. Functionally, may function as positive regulator of plant growth. The sequence is that of VQ motif-containing protein 22 from Arabidopsis thaliana (Mouse-ear cress).